A 253-amino-acid polypeptide reads, in one-letter code: MSLPDSETLMKTVLEKYPDATDLKEDIDVHMEEFKAFEYRFKLTNVVLRALTLPIPKLEDESEVVFEGRSITYHWTFWTGDDEKKIVSWVNYSPKPIAIQTLKNKSSHRKKDITYSQYIDIKGTVEPGFVVPKNYFVPHPDPDLQPEDAVVHYQILTSMKDSIEDMPHLMSETKLDCEMYIKDRFEELLQEYQESKNTYYLARADFYRKLKFEHLDLDHQLLISAANRDWIDGYFLEKELRASYSLKIDSLAC.

This is an uncharacterized protein from Caenorhabditis elegans.